The primary structure comprises 229 residues: Aminodeoxyfutalosine nucleosidase (229 aa).

Catalysis depends on Glu13, which acts as the Proton acceptor. Residues Gly79, Ile153, and 173-174 (ME) each bind substrate. The active-site Proton donor is Asp197.

The protein belongs to the PNP/UDP phosphorylase family. As to quaternary structure, homodimer.

The enzyme catalyses 6-amino-6-deoxyfutalosine + H2O = dehypoxanthine futalosine + adenine. It carries out the reaction S-adenosyl-L-homocysteine + H2O = S-(5-deoxy-D-ribos-5-yl)-L-homocysteine + adenine. It catalyses the reaction S-methyl-5'-thioadenosine + H2O = 5-(methylsulfanyl)-D-ribose + adenine. The catalysed reaction is 5'-deoxyadenosine + H2O = 5-deoxy-D-ribose + adenine. It functions in the pathway quinol/quinone metabolism; menaquinone biosynthesis. Its pathway is amino-acid biosynthesis; L-methionine biosynthesis via salvage pathway; S-methyl-5-thio-alpha-D-ribose 1-phosphate from S-methyl-5'-thioadenosine (hydrolase route): step 1/2. Catalyzes the direct conversion of aminodeoxyfutalosine (AFL) into dehypoxanthine futalosine (DHFL) and adenine via the hydrolysis of the N-glycosidic bond; this reaction seems to represent an essential step in the menaquinone biosynthesis pathway in Campylobacter species. Also catalyzes the hydrolysis of 5'-methylthioadenosine (MTA) to adenine and 5'-methylthioribose. Can also probably use S-adenosylhomocysteine (SAH) as substrate, leading to adenine and S-ribosylhomocysteine. These other activities highlight the tremendous versatility of the enzyme, which also plays key roles in S-adenosylmethionine recycling and in the biosynthesis of the quorum-sensing molecule autoinducer-2. Shows negligible activity with futalosine (FL) as substrate. The chain is Aminodeoxyfutalosine nucleosidase (pfs) from Campylobacter jejuni subsp. jejuni serotype O:2 (strain ATCC 700819 / NCTC 11168).